The primary structure comprises 51 residues: Large ribosomal subunit protein bL33 (51 aa).

The interval 1–21 (MRDKIKLESGAGTGHFYTTTK) is disordered.

The protein belongs to the bacterial ribosomal protein bL33 family.

In Neisseria gonorrhoeae (strain ATCC 700825 / FA 1090), this protein is Large ribosomal subunit protein bL33.